A 119-amino-acid polypeptide reads, in one-letter code: Large ribosomal subunit protein bL20 (119 aa).

The protein belongs to the bacterial ribosomal protein bL20 family.

In terms of biological role, binds directly to 23S ribosomal RNA and is necessary for the in vitro assembly process of the 50S ribosomal subunit. It is not involved in the protein synthesizing functions of that subunit. The polypeptide is Large ribosomal subunit protein bL20 (Clostridium kluyveri (strain NBRC 12016)).